The sequence spans 271 residues: Sulfur carrier protein FdhD (271 aa).

Catalysis depends on cysteine 114, which acts as the Cysteine persulfide intermediate.

Belongs to the FdhD family.

Its subcellular location is the cytoplasm. Its function is as follows. Required for formate dehydrogenase (FDH) activity. Acts as a sulfur carrier protein that transfers sulfur from IscS to the molybdenum cofactor prior to its insertion into FDH. This Agrobacterium fabrum (strain C58 / ATCC 33970) (Agrobacterium tumefaciens (strain C58)) protein is Sulfur carrier protein FdhD.